An 87-amino-acid polypeptide reads, in one-letter code: Defensin-like protein 176 (87 aa).

Positions 1–23 (MAKATSSLVVPIIFLVIFALVEQ) are cleaved as a signal peptide. Intrachain disulfides connect Cys-27-Cys-66, Cys-36-Cys-55, Cys-39-Cys-60, and Cys-43-Cys-62.

It belongs to the DEFL family.

The protein localises to the secreted. The chain is Defensin-like protein 176 (LCR65) from Arabidopsis thaliana (Mouse-ear cress).